The chain runs to 388 residues: Nocturnin (388 aa).

Glutamate 152 provides a ligand contact to Mg(2+). Substrate contacts are provided by residues glutamate 152, 176–178 (KPW), asparagine 220, 243–246 (HLKA), 281–283 (DFN), and histidine 371.

Belongs to the CCR4/nocturin family. The cofactor is Mg(2+). Expressed only in the photoreceptors of the retina. Expression is controlled by the retinal circadian clock.

Its subcellular location is the cytoplasm. The protein resides in the nucleus. It localises to the perinuclear region. The protein localises to the mitochondrion. It carries out the reaction NADP(+) + H2O = phosphate + NAD(+). The enzyme catalyses NADPH + H2O = phosphate + NADH. In terms of biological role, phosphatase which catalyzes the conversion of NADP(+) to NAD(+) and of NADPH to NADH. Shows a small preference for NADPH over NADP(+). Component of the circadian clock or downstream effector of clock function. Exhibits a high amplitude circadian rhythm with maximal levels in early evening. In constant darkness or constant light, the amplitude of the rhythm decreases. The protein is Nocturnin of Xenopus laevis (African clawed frog).